A 252-amino-acid chain; its full sequence is Chitooligosaccharide deacetylase (252 aa).

H125 serves as a coordination point for Mg(2+).

This sequence belongs to the YdjC deacetylase family. ChbG subfamily. Homodimer. Requires Mg(2+) as cofactor.

The protein localises to the cytoplasm. It catalyses the reaction N,N'-diacetylchitobiose + H2O = N-acetyl-beta-D-glucosaminyl-(1-&gt;4)-D-glucosamine + acetate. The catalysed reaction is diacetylchitobiose-6'-phosphate + H2O = N'-monoacetylchitobiose-6'-phosphate + acetate. Its pathway is glycan degradation; chitin degradation. Involved in the degradation of chitin. ChbG is essential for growth on the acetylated chitooligosaccharides chitobiose and chitotriose but is dispensable for growth on cellobiose and chitosan dimer, the deacetylated form of chitobiose. Deacetylation of chitobiose-6-P and chitotriose-6-P is necessary for both the activation of the chb promoter by the regulatory protein ChbR and the hydrolysis of phosphorylated beta-glucosides by the phospho-beta-glucosidase ChbF. Catalyzes the removal of only one acetyl group from chitobiose-6-P to yield monoacetylchitobiose-6-P, the inducer of ChbR and the substrate of ChbF. This is Chitooligosaccharide deacetylase from Escherichia coli O157:H7.